We begin with the raw amino-acid sequence, 350 residues long: MDSFHPTPGKPTTATSNSSLNFFVRNREKSIRCSSLHQTFTAPSPEASPSIGLRYVNYSMSDETDESMFPLDSELTDMEDDDTEYISDSTTDLPSAAMARGTRQLSYNENLDQRSFSKTPNKHIEVKNLKDLCSPSHSGRISKSLCPVLRRKSLLPKPKMFQRVASALYEESSPLELEIRSESEFSKMFFEPKKSSSFVSRAASPAMVGPGVPFYSSITGANGNVLAPSGSLKAVENSDVIESSAEDSSNTDNPSTKPSNEMPISPLLSSSVFFKDTEMSTPNSNHSRSRTPSSKKRTRWGEEIIDLSKRRAVSPSIYYDLDKKCSPIHSVMVSPLKIKDTHEVLMNLKL.

Disordered regions lie at residues 1-21, 237-266, and 278-298; these read MDSF…SSLN, NSDV…PISP, and EMST…KKRT. Polar residues-rich tracts occupy residues 10–21 and 246–259; these read KPTTATSNSSLN and EDSS…TKPS. A compositionally biased stretch (basic residues) spans 287 to 298; it reads SRSRTPSSKKRT.

The protein localises to the nucleus. This is an uncharacterized protein from Schizosaccharomyces pombe (strain 972 / ATCC 24843) (Fission yeast).